The sequence spans 208 residues: LexA repressor (208 aa).

Residues 29-49 (IREIGDSLNINSTSTVHNNIL) constitute a DNA-binding region (H-T-H motif). Active-site for autocatalytic cleavage activity residues include S131 and K168.

It belongs to the peptidase S24 family. In terms of assembly, homodimer.

The catalysed reaction is Hydrolysis of Ala-|-Gly bond in repressor LexA.. In terms of biological role, represses a number of genes involved in the response to DNA damage (SOS response), including recA and lexA. In the presence of single-stranded DNA, RecA interacts with LexA causing an autocatalytic cleavage which disrupts the DNA-binding part of LexA, leading to derepression of the SOS regulon and eventually DNA repair. The chain is LexA repressor from Finegoldia magna (strain ATCC 29328 / DSM 20472 / WAL 2508) (Peptostreptococcus magnus).